The following is a 366-amino-acid chain: MWRESPERQQPLRTGLTTGTCATACALAAARLLLTGKSCDECEVTLPKGRKVRLPIAECRRLDVYSAYAATVKDAGDDPDVTHGAQVFVIASLGTGAGEVRFSAADGVGTVTRDGLSLAVGEPAINPTPRRMIREHLLELADECAYNGAFDVAVGVENGAALAQKTMNPRLGIVGGLSILGTTGIVRPFSCSAYIASIHQGVDVARANGYDHIAACTGNASEDYARRHYDLPDMALIEMGDFAGALLKYLRRSPLRRLTIVGGFGKISKLACGHLDLHSKASEIDLDFIADAAGSLGATPNTLAAMRAANTSIEALRLAGDLPLGDLICRRAWEKAAYTMHNSMQLEVVAIDRQGLPVGAYAGEDL.

Belongs to the CbiD family.

It carries out the reaction Co-precorrin-5B + S-adenosyl-L-methionine = Co-precorrin-6A + S-adenosyl-L-homocysteine. It participates in cofactor biosynthesis; adenosylcobalamin biosynthesis; cob(II)yrinate a,c-diamide from sirohydrochlorin (anaerobic route): step 6/10. Its function is as follows. Catalyzes the methylation of C-1 in cobalt-precorrin-5B to form cobalt-precorrin-6A. In Hahella chejuensis (strain KCTC 2396), this protein is Cobalt-precorrin-5B C(1)-methyltransferase.